A 201-amino-acid polypeptide reads, in one-letter code: Protein tirC (201 aa).

In terms of domain architecture, TIR spans 52–186; sequence ERIKVFIVHG…YVWINYTEDL (135 aa).

This chain is Protein tirC (tirC), found in Dictyostelium discoideum (Social amoeba).